The following is a 552-amino-acid chain: Serine/threonine-protein kinase RIO2 (552 aa).

The Protein kinase domain maps to 97-272; it reads VGNQMGVGKE…DRDVKCIKDF (176 aa). Position 123 (K123) interacts with ATP. D228 functions as the Proton acceptor in the catalytic mechanism. Phosphoserine is present on residues S332, S335, S337, S350, S362, S380, S382, S385, and S390. The Nuclear export signal motif lies at 399-408; sequence ALEEIKGQVV. S412, S417, and S442 each carry phosphoserine. Y445 carries the post-translational modification Phosphotyrosine. S548 is modified (phosphoserine).

Belongs to the protein kinase superfamily. RIO-type Ser/Thr kinase family. In terms of assembly, associated with late 40S pre-ribosomal particles. Interacts with PLK1 (via its N-terminus). It depends on Mg(2+) as a cofactor. In terms of processing, autophosphorylated (in vitro). Phosphorylation at Ser-335, Ser-380, Ser-548 by PLK1 affects the timing of the metaphase-anaphase transition.

The protein resides in the cytoplasm. The enzyme catalyses L-seryl-[protein] + ATP = O-phospho-L-seryl-[protein] + ADP + H(+). It carries out the reaction L-threonyl-[protein] + ATP = O-phospho-L-threonyl-[protein] + ADP + H(+). Its function is as follows. Serine/threonine-protein kinase involved in the final steps of cytoplasmic maturation of the 40S ribosomal subunit. Involved in export of the 40S pre-ribosome particles (pre-40S) from the nucleus to the cytoplasm. Its kinase activity is required for the release of NOB1, PNO1 and LTV1 from the late pre-40S and the processing of 18S-E pre-rRNA to the mature 18S rRNA. Regulates the timing of the metaphase-anaphase transition during mitotic progression, and its phosphorylation, most likely by PLK1, regulates this function. The protein is Serine/threonine-protein kinase RIO2 of Homo sapiens (Human).